Here is a 131-residue protein sequence, read N- to C-terminus: Small ribosomal subunit protein uS8 (131 aa).

It belongs to the universal ribosomal protein uS8 family. In terms of assembly, part of the 30S ribosomal subunit. Contacts proteins S5 and S12.

Its function is as follows. One of the primary rRNA binding proteins, it binds directly to 16S rRNA central domain where it helps coordinate assembly of the platform of the 30S subunit. The protein is Small ribosomal subunit protein uS8 of Thiobacillus denitrificans (strain ATCC 25259 / T1).